The primary structure comprises 238 residues: 1-(5-phosphoribosyl)-5-[(5-phosphoribosylamino)methylideneamino] imidazole-4-carboxamide isomerase (238 aa).

Residue D8 is the Proton acceptor of the active site. The active-site Proton donor is D129.

The protein belongs to the HisA/HisF family.

It localises to the cytoplasm. It carries out the reaction 1-(5-phospho-beta-D-ribosyl)-5-[(5-phospho-beta-D-ribosylamino)methylideneamino]imidazole-4-carboxamide = 5-[(5-phospho-1-deoxy-D-ribulos-1-ylimino)methylamino]-1-(5-phospho-beta-D-ribosyl)imidazole-4-carboxamide. Its pathway is amino-acid biosynthesis; L-histidine biosynthesis; L-histidine from 5-phospho-alpha-D-ribose 1-diphosphate: step 4/9. The sequence is that of 1-(5-phosphoribosyl)-5-[(5-phosphoribosylamino)methylideneamino] imidazole-4-carboxamide isomerase from Lacticaseibacillus casei (strain BL23) (Lactobacillus casei).